The chain runs to 815 residues: G-type lectin S-receptor-like serine/threonine-protein kinase SD1-1 (815 aa).

The signal sequence occupies residues 1 to 22; sequence MREIHSLFSLSLFLISSSLSVA. Over 23 to 438 the chain is Extracellular; that stretch reads LDYNVITPKE…FAKIEFKGRE (416 aa). The Bulb-type lectin domain maps to 25–152; it reads YNVITPKEFL…EEAVLWQSFD (128 aa). Residues asparagine 93, asparagine 249, and asparagine 265 are each glycosylated (N-linked (GlcNAc...) asparagine). Positions 288–326 constitute an EGF-like domain; it reads PEDECDYYSICGAYAVCGINSKNTPSCSCLQGFKPKSGR. 2 disulfide bridges follow: cysteine 292–cysteine 304 and cysteine 298–cysteine 314. 2 N-linked (GlcNAc...) asparagine glycosylation sites follow: asparagine 329 and asparagine 385. Residues 345–428 form the PAN domain; it reads CEKKDAFVKF…FGQDVYIRMG (84 aa). 2 cysteine pairs are disulfide-bonded: cysteine 378–cysteine 403 and cysteine 382–cysteine 388. Residues 439 to 459 form a helical membrane-spanning segment; the sequence is VVGMVVGSVVAIAVVLVVVFA. At 460-815 the chain is on the cytoplasmic side; it reads CFRKKIMKRY…EVSITMLQGR (356 aa). The region spanning 500–783 is the Protein kinase domain; sequence FSYVNFLGRG…SDSSLPHPTQ (284 aa). Residues 506 to 514 and lysine 528 contribute to the ATP site; that span reads LGRGGFGPV. Serine 534 bears the Phosphoserine mark. The tract at residues 589 to 606 is caM-binding; the sequence is RRSTELDWKKRMNIINGV. The Proton acceptor role is filled by aspartate 625. Residue serine 642 is modified to Phosphoserine. Threonine 659 carries the post-translational modification Phosphothreonine. Phosphoserine is present on residues serine 797 and serine 803. Threonine 810 is subject to Phosphothreonine.

Belongs to the protein kinase superfamily. Ser/Thr protein kinase family. In terms of assembly, interacts with PUB9, PUB13 and PUB14.

Its subcellular location is the cell membrane. The enzyme catalyses L-seryl-[protein] + ATP = O-phospho-L-seryl-[protein] + ADP + H(+). It carries out the reaction L-threonyl-[protein] + ATP = O-phospho-L-threonyl-[protein] + ADP + H(+). In Arabidopsis thaliana (Mouse-ear cress), this protein is G-type lectin S-receptor-like serine/threonine-protein kinase SD1-1 (SD11).